The chain runs to 389 residues: S-adenosylmethionine synthase (389 aa).

Histidine 17 provides a ligand contact to ATP. Aspartate 19 contributes to the Mg(2+) binding site. Residue glutamate 45 participates in K(+) binding. Glutamate 58 and glutamine 101 together coordinate L-methionine. The interval 101 to 111 is flexible loop; it reads QSPDISQGVTE. ATP is bound by residues 168 to 170, 234 to 235, aspartate 243, 249 to 250, alanine 266, and lysine 270; these read DSK, RF, and RK. Aspartate 243 contacts L-methionine. Lysine 274 contacts L-methionine.

The protein belongs to the AdoMet synthase family. In terms of assembly, homotetramer; dimer of dimers. Mg(2+) is required as a cofactor. K(+) serves as cofactor.

Its subcellular location is the cytoplasm. It catalyses the reaction L-methionine + ATP + H2O = S-adenosyl-L-methionine + phosphate + diphosphate. It functions in the pathway amino-acid biosynthesis; S-adenosyl-L-methionine biosynthesis; S-adenosyl-L-methionine from L-methionine: step 1/1. Functionally, catalyzes the formation of S-adenosylmethionine (AdoMet) from methionine and ATP. The overall synthetic reaction is composed of two sequential steps, AdoMet formation and the subsequent tripolyphosphate hydrolysis which occurs prior to release of AdoMet from the enzyme. The chain is S-adenosylmethionine synthase from Geobacter sulfurreducens (strain ATCC 51573 / DSM 12127 / PCA).